The chain runs to 149 residues: Alpha-crystallin A chain (149 aa).

Residues 41–149 (LFRTVLESGI…DTSYSERPIP (109 aa)) form the sHSP domain. Residues histidine 89, glutamate 91, and histidine 96 each contribute to the Zn(2+) site.

It belongs to the small heat shock protein (HSP20) family. In terms of assembly, heteropolymer composed of three CRYAA and one CRYAB subunits. Inter-subunit bridging via zinc ions enhances stability, which is crucial as there is no protein turn over in the lens. Zinc coordination is achieved at least by His-89, Glu-91 and His-96. His-83 and Glu-85 come from the same molecule within the oligomer, while His-90 residue is provided by another molecule. Can also form homodimers and homotetramers (dimers of dimers) which serve as the building blocks of homooligomers.

Its subcellular location is the cytoplasm. The protein resides in the nucleus. Its function is as follows. Contributes to the transparency and refractive index of the lens. May act as a chaperone, preventing aggregation of various proteins under a wide range of stress conditions. The sequence is that of Alpha-crystallin A chain (CRYAA) from Trachemys scripta elegans (Red-eared slider turtle).